A 596-amino-acid chain; its full sequence is Nodulation outer protein X (596 aa).

It is found in the secreted. This Sinorhizobium fredii (strain NBRC 101917 / NGR234) protein is Nodulation outer protein X (nopX).